The primary structure comprises 351 residues: Anthranilate phosphoribosyltransferase (351 aa).

Residues glycine 89, 92 to 93 (GD), threonine 97, 99 to 102 (NIST), 117 to 125 (KHGNRSASG), and serine 129 contribute to the 5-phospho-alpha-D-ribose 1-diphosphate site. Position 89 (glycine 89) interacts with anthranilate. Position 101 (serine 101) interacts with Mg(2+). Asparagine 120 contacts anthranilate. Arginine 175 serves as a coordination point for anthranilate. Mg(2+) contacts are provided by aspartate 234 and glutamate 235.

The protein belongs to the anthranilate phosphoribosyltransferase family. In terms of assembly, homodimer. Requires Mg(2+) as cofactor.

The enzyme catalyses N-(5-phospho-beta-D-ribosyl)anthranilate + diphosphate = 5-phospho-alpha-D-ribose 1-diphosphate + anthranilate. Its pathway is amino-acid biosynthesis; L-tryptophan biosynthesis; L-tryptophan from chorismate: step 2/5. Catalyzes the transfer of the phosphoribosyl group of 5-phosphorylribose-1-pyrophosphate (PRPP) to anthranilate to yield N-(5'-phosphoribosyl)-anthranilate (PRA). The sequence is that of Anthranilate phosphoribosyltransferase from Synechococcus sp. (strain CC9902).